The following is a 117-amino-acid chain: Large ribosomal subunit protein uL24 (117 aa).

The protein belongs to the universal ribosomal protein uL24 family. In terms of assembly, part of the 50S ribosomal subunit.

Functionally, one of two assembly initiator proteins, it binds directly to the 5'-end of the 23S rRNA, where it nucleates assembly of the 50S subunit. Located at the polypeptide exit tunnel on the outside of the subunit. This Methanothermobacter thermautotrophicus (strain ATCC 29096 / DSM 1053 / JCM 10044 / NBRC 100330 / Delta H) (Methanobacterium thermoautotrophicum) protein is Large ribosomal subunit protein uL24.